Reading from the N-terminus, the 70-residue chain is Dermaseptin-PH (70 aa).

A signal peptide spans 1-22; the sequence is MDILKKSLFLILFLGVVSLSIC. Residues 23-44 constitute a propeptide that is removed on maturation; that stretch reads EEEKRENEEEMEQDDEQSEMKR. Glutamine 67 is modified (glutamine amide). Positions 68–70 are excised as a propeptide; sequence GGQ.

Belongs to the frog skin active peptide (FSAP) family. In terms of tissue distribution, expressed by the skin glands.

The protein localises to the secreted. Its subcellular location is the target cell membrane. Antimicrobial peptide which inhibits the growth of Gram-negative (MIC=16-64 uM) and Gram-positive bacteria (MIC=32 uM), and pathogenic yeast Candida albicans (MIC=16 uM). Shows a broad-spectrum of anticancer activities against several cancer cell lines. Also shows slight cytotoxicity on human dermal microvascular endothelium cells (IC(50)=4.85 uM). Induces low hemolysis against horse erythrocytes. This chain is Dermaseptin-PH, found in Pithecopus hypochondrialis (Orange-legged leaf frog).